We begin with the raw amino-acid sequence, 430 residues long: Serine--tRNA ligase (430 aa).

237–239 serves as a coordination point for L-serine; sequence TAE. An ATP-binding site is contributed by 268–270; the sequence is RSE. E291 is a binding site for L-serine. 355 to 358 is a binding site for ATP; it reads EISS. Position 391 (S391) interacts with L-serine.

This sequence belongs to the class-II aminoacyl-tRNA synthetase family. Type-1 seryl-tRNA synthetase subfamily. In terms of assembly, homodimer. The tRNA molecule binds across the dimer.

Its subcellular location is the cytoplasm. It catalyses the reaction tRNA(Ser) + L-serine + ATP = L-seryl-tRNA(Ser) + AMP + diphosphate + H(+). It carries out the reaction tRNA(Sec) + L-serine + ATP = L-seryl-tRNA(Sec) + AMP + diphosphate + H(+). The protein operates within aminoacyl-tRNA biosynthesis; selenocysteinyl-tRNA(Sec) biosynthesis; L-seryl-tRNA(Sec) from L-serine and tRNA(Sec): step 1/1. Catalyzes the attachment of serine to tRNA(Ser). Is also able to aminoacylate tRNA(Sec) with serine, to form the misacylated tRNA L-seryl-tRNA(Sec), which will be further converted into selenocysteinyl-tRNA(Sec). This chain is Serine--tRNA ligase, found in Salmonella paratyphi C (strain RKS4594).